Consider the following 358-residue polypeptide: Gap junction alpha-5 protein (358 aa).

Topologically, residues 1 to 19 (MGDWSFLGEFLEEVHKHST) are cytoplasmic. A helical membrane pass occupies residues 20-40 (VIGKVWLTVLFIFRMLVLGTA). Residues 41–76 (AESSWGDEQADFRCDTIQPGCQNVCYDQAFPISHIR) lie on the Extracellular side of the membrane. Residues 77–97 (YWVLQIIFVSTPSLVYMGHAM) traverse the membrane as a helical segment. Over 98-164 (HTVRMQEKQK…CTILIRTTME (67 aa)) the chain is Cytoplasmic. Residues 165 to 185 (VAFIVGQYLLYGIFLDTLHVC) form a helical membrane-spanning segment. The Extracellular portion of the chain corresponds to 186 to 205 (RRSPCPHPVNCYVSRPTEKN). Residues 206-226 (VFIVFMMAVAGLSLFLSLAEL) traverse the membrane as a helical segment. The Cytoplasmic segment spans residues 227–358 (YHLGWKKIRQ…SKARSDDLSV (132 aa)). Disordered regions lie at residues 242–262 (RQGVDKHQLPGPPTSLVQSLT) and 318–358 (SQKP…DLSV). Phosphoserine is present on residues S353 and S357.

The protein belongs to the connexin family. Alpha-type (group II) subfamily. As to quaternary structure, a connexon is composed of a hexamer of connexins. Abundantly expressed in the lung, also expressed in the kidney and heart.

The protein resides in the cell membrane. It is found in the cell junction. Its subcellular location is the gap junction. One gap junction consists of a cluster of closely packed pairs of transmembrane channels, the connexons, through which materials of low MW diffuse from one cell to a neighboring cell. In Mus musculus (Mouse), this protein is Gap junction alpha-5 protein (Gja5).